A 361-amino-acid polypeptide reads, in one-letter code: Holliday junction branch migration complex subunit RuvB (361 aa).

The large ATPase domain (RuvB-L) stretch occupies residues 1 to 183 (MAEPSLVAAG…FGFTGHLEFY (183 aa)). Residues leucine 22, arginine 23, glycine 64, lysine 67, threonine 68, threonine 69, 130-132 (EDF), arginine 173, tyrosine 183, and arginine 220 contribute to the ATP site. Residue threonine 68 participates in Mg(2+) binding. Residues 184–254 (SVPELELVLR…SASAALDMYE (71 aa)) are small ATPAse domain (RuvB-S). The segment at 257–361 (KKGLDRLDRS…VTGEWAPESQ (105 aa)) is head domain (RuvB-H). DNA is bound by residues arginine 312 and arginine 317.

Belongs to the RuvB family. As to quaternary structure, homohexamer. Forms an RuvA(8)-RuvB(12)-Holliday junction (HJ) complex. HJ DNA is sandwiched between 2 RuvA tetramers; dsDNA enters through RuvA and exits via RuvB. An RuvB hexamer assembles on each DNA strand where it exits the tetramer. Each RuvB hexamer is contacted by two RuvA subunits (via domain III) on 2 adjacent RuvB subunits; this complex drives branch migration. In the full resolvosome a probable DNA-RuvA(4)-RuvB(12)-RuvC(2) complex forms which resolves the HJ.

Its subcellular location is the cytoplasm. The enzyme catalyses ATP + H2O = ADP + phosphate + H(+). The RuvA-RuvB-RuvC complex processes Holliday junction (HJ) DNA during genetic recombination and DNA repair, while the RuvA-RuvB complex plays an important role in the rescue of blocked DNA replication forks via replication fork reversal (RFR). RuvA specifically binds to HJ cruciform DNA, conferring on it an open structure. The RuvB hexamer acts as an ATP-dependent pump, pulling dsDNA into and through the RuvAB complex. RuvB forms 2 homohexamers on either side of HJ DNA bound by 1 or 2 RuvA tetramers; 4 subunits per hexamer contact DNA at a time. Coordinated motions by a converter formed by DNA-disengaged RuvB subunits stimulates ATP hydrolysis and nucleotide exchange. Immobilization of the converter enables RuvB to convert the ATP-contained energy into a lever motion, pulling 2 nucleotides of DNA out of the RuvA tetramer per ATP hydrolyzed, thus driving DNA branch migration. The RuvB motors rotate together with the DNA substrate, which together with the progressing nucleotide cycle form the mechanistic basis for DNA recombination by continuous HJ branch migration. Branch migration allows RuvC to scan DNA until it finds its consensus sequence, where it cleaves and resolves cruciform DNA. The chain is Holliday junction branch migration complex subunit RuvB from Pseudarthrobacter chlorophenolicus (strain ATCC 700700 / DSM 12829 / CIP 107037 / JCM 12360 / KCTC 9906 / NCIMB 13794 / A6) (Arthrobacter chlorophenolicus).